We begin with the raw amino-acid sequence, 86 residues long: Large ribosomal subunit protein uL23 (86 aa).

This sequence belongs to the universal ribosomal protein uL23 family. Part of the 50S ribosomal subunit. Contacts protein L29.

In terms of biological role, binds to 23S rRNA. One of the proteins that surrounds the polypeptide exit tunnel on the outside of the ribosome. The polypeptide is Large ribosomal subunit protein uL23 (Thermococcus gammatolerans (strain DSM 15229 / JCM 11827 / EJ3)).